Consider the following 355-residue polypeptide: Peptide chain release factor 1 (355 aa).

Position 233 is an N5-methylglutamine (Gln233).

The protein belongs to the prokaryotic/mitochondrial release factor family. Methylated by PrmC. Methylation increases the termination efficiency of RF1.

The protein localises to the cytoplasm. Peptide chain release factor 1 directs the termination of translation in response to the peptide chain termination codons UAG and UAA. The polypeptide is Peptide chain release factor 1 (Bacillus cereus (strain ATCC 14579 / DSM 31 / CCUG 7414 / JCM 2152 / NBRC 15305 / NCIMB 9373 / NCTC 2599 / NRRL B-3711)).